The chain runs to 168 residues: Pollen allergen Che a 1 (168 aa).

Positions 1–25 (MAKCQAVFLLVGALCVLSLAGVANA) are cleaved as a signal peptide. 3 disulfide bridges follow: Cys-38-Cys-109, Cys-41-Cys-153, and Cys-62-Cys-97. Asn-64 carries an N-linked (GlcNAc...) asparagine glycan.

The protein belongs to the Ole e I family.

It localises to the secreted. This Chenopodium album (Fat hen) protein is Pollen allergen Che a 1.